An 849-amino-acid chain; its full sequence is Membrane protein-large ribosomal subunit bL9 fusion protein (849 aa).

The unknown stretch occupies residues 1 to 680 (MFSKNKHNTK…TQLEGTNIKT (680 aa)). 2 helical membrane passes run 11–31 (FIVI…FDFQ) and 64–84 (IIFF…IISF). A GGDEF domain is found at 214–342 (KTLAIAMIAF…GGDQVVVNIE (129 aa)). The interval 681–849 (VTDTLKHFLK…FLNVTERKSK (169 aa)) is large ribosomal subunit protein bL9.

It belongs to the bacterial ribosomal protein bL9 family.

It is found in the cell membrane. Its function is as follows. Binds to the 23S rRNA. This is Membrane protein-large ribosomal subunit bL9 fusion protein from Aster yellows witches'-broom phytoplasma (strain AYWB).